An 891-amino-acid polypeptide reads, in one-letter code: Longitudinals lacking protein, isoform G (891 aa).

The BTB domain occupies 32–97 (VDCTLAAEGK…MYRGEVNISQ (66 aa)). 2 disordered regions span residues 115–200 (LSDN…SSVL) and 228–340 (SSGP…ASAS). Ser140 carries the post-translational modification Phosphoserine. Thr161 is modified (phosphothreonine). Residues Ser162 and Ser168 each carry the phosphoserine modification. Composition is skewed to low complexity over residues 162-175 (SGDVSGSREGSSSP), 228-251 (SSGPAAGTSSQASSTQQQQPLTST), 263-293 (TSSTAAPASGASASAAVQQAHLHQQQAQTTS), and 329-340 (NSATGPNPASAS). Phosphoserine is present on residues Ser372, Ser375, and Ser378. Residues 446-467 (QDAQQRDPQDLSRKENTAPDVA) are disordered. Positions 449-462 (QQRDPQDLSRKENT) are enriched in basic and acidic residues. A phosphoserine mark is found at Ser696 and Ser705. Thr706 carries the post-translational modification Phosphothreonine. Residues Ser749 and Ser750 each carry the phosphoserine modification. The C2H2-type 1; degenerate zinc finger occupies 791-813 (YECRHCGKKYRWKSTLRRHENVE). A C2H2-type 2 zinc finger spans residues 821-843 (HQCPYCPYKSKQRGNLGVHVRKH). Residues 840–891 (VRKHHTDLPQLPSKRRSKYSMNRENGMSGSMSDDSQGKLIIDFNGKGELETK) form a disordered region. Ser874 bears the Phosphoserine mark.

As to expression, expressed in both mesoderm and ectoderm with expression highest in the mesectoderm by stage 11. Becomes enriched in a cluster of brain cells, in abdominal histoblasts, and in the embryonic imaginal disks during later stages.

The protein resides in the nucleus. Functionally, putative transcription factor required for axon growth and guidance in the central and peripheral nervous systems. Repels CNS axons away from the midline by promoting the expression of the midline repellent sli and its receptor robo. In Drosophila melanogaster (Fruit fly), this protein is Longitudinals lacking protein, isoform G.